A 248-amino-acid polypeptide reads, in one-letter code: MIVLVTGATAGFGECITRRFIQQGHKVIATGRRQERLQELKDELGDNLYIAQLDVRNRAAIEEMLASLPAEWCNIDILVNNAGLALGMEPAHKASVEDWETMIDTNNKGLVYMTRAVLPGMVERNHGHIINIGSTAGSWPYAGGNVYGATKAFVRQFSLNLRTDLHGTAVRVTDIEPGLVGGTEFSNVRFKGDDGKAEKTYQNTVALTPEDVSEAVWWVSTLPAHVNINTLEMMPVTQSYAGLNVHRQ.

Residues 7–12 (GATAGF), 32–33 (RR), 54–55 (DV), and asparagine 81 contribute to the NADP(+) site. Position 134 (serine 134) interacts with substrate. NADP(+)-binding positions include tyrosine 147, lysine 151, and 177–185 (PGLVGGTEF). Tyrosine 147 functions as the Proton acceptor in the catalytic mechanism.

The protein belongs to the short-chain dehydrogenases/reductases (SDR) family. As to quaternary structure, homotetramer.

The enzyme catalyses 3-hydroxypropanoate + NADP(+) = 3-oxopropanoate + NADPH + H(+). It carries out the reaction L-allo-threonine + NADP(+) = aminoacetone + CO2 + NADPH. Its function is as follows. NADP-dependent dehydrogenase with broad substrate specificity acting on 3-hydroxy acids. Catalyzes the NADP-dependent oxidation of L-allo-threonine to L-2-amino-3-keto-butyrate, which is spontaneously decarboxylated into aminoacetone. Also acts on D-threonine, L-serine, D-serine, D-3-hydroxyisobutyrate, L-3-hydroxyisobutyrate, D-glycerate and L-glycerate. Able to catalyze the reduction of the malonic semialdehyde to 3-hydroxypropionic acid. YdfG is apparently supplementing RutE, the presumed malonic semialdehyde reductase involved in pyrimidine degradation since both are able to detoxify malonic semialdehyde. The chain is NADP-dependent 3-hydroxy acid dehydrogenase YdfG from Escherichia coli (strain K12).